Here is a 248-residue protein sequence, read N- to C-terminus: uncharacterized protein (248 aa).

The chain crosses the membrane as a helical span at residues 30-50 (LIALAIFIGLIAIFMFGCKAA). Disordered stretches follow at residues 59 to 91 (NRDT…MDPP) and 208 to 248 (TTES…VSTR). 2 stretches are compositionally biased toward polar residues: residues 210-220 (ESPAPAQSTSN) and 239-248 (SLHNETVSTR).

It is found in the membrane. This is an uncharacterized protein from Caenorhabditis elegans.